We begin with the raw amino-acid sequence, 351 residues long: DNA-directed RNA polymerase subunit alpha (351 aa).

Residues 1–236 are alpha N-terminal domain (alpha-NTD); it reads MSVNTKNWQE…DQLTLFVHFE (236 aa). The alpha C-terminal domain (alpha-CTD) stretch occupies residues 256–351; that stretch reads DDANQLNRYL…AKKLEQELLG (96 aa).

It belongs to the RNA polymerase alpha chain family. In terms of assembly, homodimer. The RNAP catalytic core consists of 2 alpha, 1 beta, 1 beta' and 1 omega subunit. When a sigma factor is associated with the core the holoenzyme is formed, which can initiate transcription.

It carries out the reaction RNA(n) + a ribonucleoside 5'-triphosphate = RNA(n+1) + diphosphate. DNA-dependent RNA polymerase catalyzes the transcription of DNA into RNA using the four ribonucleoside triphosphates as substrates. The sequence is that of DNA-directed RNA polymerase subunit alpha from Erythrobacter litoralis (strain HTCC2594).